The primary structure comprises 329 residues: Beta-1,3-galactosyltransferase 6 (329 aa).

Over 1-11 (MKLLRRAWRRR) the chain is Cytoplasmic. Residues 12 to 34 (AALGLGTLALCGAALLYLARCAA) traverse the membrane as a helical; Signal-anchor for type II membrane protein segment. At 35–329 (EPGDPRAMSG…QCCQRREGIP (295 aa)) the chain is on the lumenal side. N-linked (GlcNAc...) asparagine glycosylation occurs at asparagine 131.

The protein belongs to the glycosyltransferase 31 family. Mn(2+) is required as a cofactor. Ubiquitous.

The protein resides in the golgi apparatus. It localises to the golgi stack membrane. It carries out the reaction 3-O-(beta-D-galactosyl-(1-&gt;4)-beta-D-xylosyl)-L-seryl-[protein] + UDP-alpha-D-galactose = 3-O-(beta-D-galactosyl-(1-&gt;3)-beta-D-galactosyl-(1-&gt;4)-beta-D-xylosyl)-L-seryl-[protein] + UDP + H(+). It functions in the pathway glycan metabolism; chondroitin sulfate biosynthesis. The protein operates within glycan metabolism; heparan sulfate biosynthesis. Functionally, beta-1,3-galactosyltransferase that transfers galactose from UDP-galactose to substrates with a terminal beta-linked galactose residue. Has a preference for galactose-beta-1,4-xylose that is found in the linker region of glycosaminoglycans, such as heparan sulfate and chondroitin sulfate. Has no activity towards substrates with terminal glucosamine or galactosamine residues. The protein is Beta-1,3-galactosyltransferase 6 (B3GALT6) of Homo sapiens (Human).